The chain runs to 658 residues: Threonine--tRNA ligase (658 aa).

A TGS domain is found at 1 to 64 (MLNSVSLTFP…GKSGKVEIIT (64 aa)). Positions 246–549 (DHRKLGREMD…LIENYSGHFP (304 aa)) are catalytic. 3 residues coordinate Zn(2+): C343, H394, and H526.

The protein belongs to the class-II aminoacyl-tRNA synthetase family. Homodimer. It depends on Zn(2+) as a cofactor.

Its subcellular location is the cytoplasm. The enzyme catalyses tRNA(Thr) + L-threonine + ATP = L-threonyl-tRNA(Thr) + AMP + diphosphate + H(+). In terms of biological role, catalyzes the attachment of threonine to tRNA(Thr) in a two-step reaction: L-threonine is first activated by ATP to form Thr-AMP and then transferred to the acceptor end of tRNA(Thr). Also edits incorrectly charged L-seryl-tRNA(Thr). This Mesorhizobium japonicum (strain LMG 29417 / CECT 9101 / MAFF 303099) (Mesorhizobium loti (strain MAFF 303099)) protein is Threonine--tRNA ligase.